The chain runs to 488 residues: Altronate oxidoreductase (488 aa).

18–29 (VIQFGEGNFLRA) is an NAD(+) binding site.

This sequence belongs to the mannitol dehydrogenase family. UxaB subfamily.

The enzyme catalyses D-altronate + NAD(+) = keto-D-tagaturonate + NADH + H(+). It participates in carbohydrate metabolism; pentose and glucuronate interconversion. In Pectobacterium atrosepticum (strain SCRI 1043 / ATCC BAA-672) (Erwinia carotovora subsp. atroseptica), this protein is Altronate oxidoreductase.